A 518-amino-acid polypeptide reads, in one-letter code: Major facilitator superfamily domain-containing protein 8 (518 aa).

Residues 1–20 (MAGLRNESEQEPLLGDTPGS) form a disordered region. Topologically, residues 1-40 (MAGLRNESEQEPLLGDTPGSREWDILETEEHYKSRWRSIR) are cytoplasmic. The short motif at 13–14 (LL) is the Dileucine internalization motif element. The chain crosses the membrane as a helical span at residues 41 to 61 (ILYLTMFLSSVGFSVVMMSIW). The Extracellular segment spans residues 62–74 (PYLQKIDPTADTS). Residues 75-95 (FLGWVIASYSLGQMVASPIFG) form a helical membrane-spanning segment. Over 96–105 (LWSNYRPRKE) the chain is Cytoplasmic. The helical transmembrane segment at 106 to 126 (PLIVSILISVAANCLYAYLHI) threads the bilayer. The Extracellular segment spans residues 127-131 (PASHN). A helical membrane pass occupies residues 132 to 152 (KYYMLVARGLLGIGAGNVAVV). Over 153 to 173 (RSYTAGATSLQERTSSMANIS) the chain is Cytoplasmic. A helical membrane pass occupies residues 174–194 (MCQALGFILGPVFQTCFTFLG). At 195 to 211 (EKGVTWDVIKLQINMYT) the chain is on the extracellular side. The helical transmembrane segment at 212-232 (TPVLLSAFLGILNIILILAIL) threads the bilayer. The Cytoplasmic portion of the chain corresponds to 233–266 (REHRVDDSGRQCKSINFEEASTDEAQVPQGNIDQ). Residues 267–287 (VAVVAINVLFFVTLFIFALFE) traverse the membrane as a helical segment. At 288–304 (TIITPLTMDMYAWTQEQ) the chain is on the extracellular side. A helical membrane pass occupies residues 305-325 (AVLYNGIILAALGVEAVVIFL). The Cytoplasmic portion of the chain corresponds to 326–337 (GVKLLSKKIGER). A helical membrane pass occupies residues 338–358 (AILLGGLIVVWVGFFILLPWG). The Extracellular portion of the chain corresponds to 359 to 412 (NQFPKIQWEDLHNNSIPNTTFGEIIIGLWKSPMEDDNERPTGCSIEQAWCLYTP). N-linked (GlcNAc...) asparagine glycans are attached at residues Asn-371 and Asn-376. The helical transmembrane segment at 413–433 (VIHLAQFLTSAVLIGLGYPVC) threads the bilayer. The Cytoplasmic segment spans residues 434-451 (NLMSYTLYSKILGPKPQG). A helical membrane pass occupies residues 452–472 (VYMGWLTASGSGARILGPMFI). Residues 473–482 (SQVYAHWGPR) lie on the Extracellular side of the membrane. A helical membrane pass occupies residues 483-503 (WAFSLVCGIIVLTITLLGVVY). At 504 to 518 (KRLIALSVRYGRIQE) the chain is on the cytoplasmic side.

Belongs to the major facilitator superfamily. In terms of tissue distribution, expressed at very low levels in all tissues tested.

Its subcellular location is the endosome membrane. The protein resides in the lysosome membrane. It carries out the reaction chloride(in) = chloride(out). The catalysed reaction is iodide(out) = iodide(in). It catalyses the reaction fluoride(in) = fluoride(out). Its activity is regulated as follows. Inhibited by chloride channel blockers 4,4'-diisothiocyano-2,2'-stilbenedisulfonate (DIDS), niflumic acid (NFA), and 5-Nitro-2-(3-phenylpropylamino) benzoic acid (NPPB). Functionally, outward-rectifying chloride channel involved in endolysosomal chloride homeostasis, membrane fusion and function. Conducts chloride currents up to hundreds of picoamperes. Regulates lysosomal calcium content by reducing the lysosomal membrane potential, thereby activating TRPML1 channel and further release of lysosomal calcium ions. Regulates the pH in endolysosomal compartments and may contribute to progressive acidification from endosome to lysosome. Permeable to other halides such as iodide and fluoride ions. The protein is Major facilitator superfamily domain-containing protein 8 of Homo sapiens (Human).